The primary structure comprises 484 residues: Calcium uniporter protein, mitochondrial (484 aa).

A mitochondrion-targeting transit peptide spans 1 to 33 (MGHVLGGTLLAANRLARPPAVVLGKPRVCCWRA). The Mitochondrial matrix portion of the chain corresponds to 34–304 (SPWPVIVSSA…CDLLAHKGAH (271 aa)). 2 disordered regions span residues 59–104 (ARYE…KGRL) and 188–227 (YTGG…DTHW). Basic and acidic residues predominate over residues 61-82 (YEARGRSTTQRKVDDRPWHRES). The segment covering 83-93 (SGSLPKSTSPD) has biased composition (polar residues). A helical transmembrane segment spans residues 305-326 (ALAKGGFAALAAWWGIVYYVTF). The Mitochondrial intermembrane portion of the chain corresponds to 327 to 334 (HTDMGWDL). A Selectivity filter motif is present at residues 332–340 (WDLVEPITY). Residues 335-355 (VEPITYLAGLASIMGGYLWFL) form a helical membrane-spanning segment. Glutamate 336 lines the Ca(2+) pocket. The Mitochondrial matrix portion of the chain corresponds to 356–484 (FISRDLSYKA…NEAAANVPGD (129 aa)). Basic and acidic residues-rich tracts occupy residues 426–435 (KEVLEEEKGG) and 452–462 (DHDHDHDHVSH). Residues 426-484 (KEVLEEEKGGKARKREQEDEDGDGDDDHDHDHDHVSHGAELQGQDILHANEAAANVPGD) are disordered.

The protein belongs to the MCU (TC 1.A.77) family. In terms of assembly, homotetramer, assembles in a dimer or dimers configuration with two interfaces.

The protein resides in the mitochondrion inner membrane. It catalyses the reaction Ca(2+)(in) = Ca(2+)(out). Its activity is regulated as follows. Inhibited by ruthenium red or its derivative Ru360. Highly selective calcium channel localized to the inner mitochondrial membrane, which mediates calcium uptake into the mitochondrial matrix. Mitochondrial calcium homeostasis plays key roles in cellular physiology and regulates ATP production, cytoplasmic calcium signals and activation of cell death pathways. Sufficient to operate as a pore-forming channel without the need of calcium-sensor or auxiliary subunit. In Metarhizium acridum (strain CQMa 102), this protein is Calcium uniporter protein, mitochondrial.